Reading from the N-terminus, the 137-residue chain is 6,7-dimethyl-8-ribityllumazine synthase (137 aa).

5-amino-6-(D-ribitylamino)uracil is bound by residues Phe-11, 43–45 (SFD), and 67–69 (CVI). A (2S)-2-hydroxy-3-oxobutyl phosphate-binding site is contributed by 72 to 73 (DT). His-75 acts as the Proton donor in catalysis. Leu-100 serves as a coordination point for 5-amino-6-(D-ribitylamino)uracil. Arg-115 lines the (2S)-2-hydroxy-3-oxobutyl phosphate pocket.

Belongs to the DMRL synthase family. In terms of assembly, forms an icosahedral capsid composed of 60 subunits, arranged as a dodecamer of pentamers.

The enzyme catalyses (2S)-2-hydroxy-3-oxobutyl phosphate + 5-amino-6-(D-ribitylamino)uracil = 6,7-dimethyl-8-(1-D-ribityl)lumazine + phosphate + 2 H2O + H(+). It functions in the pathway cofactor biosynthesis; riboflavin biosynthesis; riboflavin from 2-hydroxy-3-oxobutyl phosphate and 5-amino-6-(D-ribitylamino)uracil: step 1/2. Functionally, catalyzes the formation of 6,7-dimethyl-8-ribityllumazine by condensation of 5-amino-6-(D-ribitylamino)uracil with 3,4-dihydroxy-2-butanone 4-phosphate. This is the penultimate step in the biosynthesis of riboflavin. This chain is 6,7-dimethyl-8-ribityllumazine synthase, found in Methanococcus maripaludis (strain C6 / ATCC BAA-1332).